Consider the following 194-residue polypeptide: Ribonuclease VapC1 (194 aa).

The PINc domain maps to Y34–A134. D37 and D150 together coordinate Mg(2+).

It belongs to the PINc/VapC protein family. Mg(2+) is required as a cofactor.

Toxic component of a type II toxin-antitoxin (TA) system. An RNase. The chain is Ribonuclease VapC1 from Thermoplasma acidophilum (strain ATCC 25905 / DSM 1728 / JCM 9062 / NBRC 15155 / AMRC-C165).